The chain runs to 247 residues: Triosephosphate isomerase (247 aa).

Substrate contacts are provided by N10 and K12. H94 functions as the Electrophile in the catalytic mechanism. E164 acts as the Proton acceptor in catalysis.

It belongs to the triosephosphate isomerase family. In terms of assembly, homodimer.

The catalysed reaction is D-glyceraldehyde 3-phosphate = dihydroxyacetone phosphate. It participates in carbohydrate biosynthesis; gluconeogenesis. Its pathway is carbohydrate degradation; glycolysis; D-glyceraldehyde 3-phosphate from glycerone phosphate: step 1/1. This is Triosephosphate isomerase (Tpi) from Culex tarsalis (Encephalitis mosquito).